The following is a 315-amino-acid chain: Methionyl-tRNA formyltransferase (315 aa).

A (6S)-5,6,7,8-tetrahydrofolate-binding site is contributed by 113–116 (SLLP).

It belongs to the Fmt family.

It catalyses the reaction L-methionyl-tRNA(fMet) + (6R)-10-formyltetrahydrofolate = N-formyl-L-methionyl-tRNA(fMet) + (6S)-5,6,7,8-tetrahydrofolate + H(+). Functionally, attaches a formyl group to the free amino group of methionyl-tRNA(fMet). The formyl group appears to play a dual role in the initiator identity of N-formylmethionyl-tRNA by promoting its recognition by IF2 and preventing the misappropriation of this tRNA by the elongation apparatus. This chain is Methionyl-tRNA formyltransferase, found in Edwardsiella ictaluri (strain 93-146).